A 295-amino-acid chain; its full sequence is Protoheme IX farnesyltransferase 2 (295 aa).

9 consecutive transmembrane segments (helical) span residues 9 to 29 (ITKP…FFLA), 36 to 56 (FALF…GCVF), 83 to 103 (LTLA…LLYV), 108 to 128 (LSAF…SLWL), 135 to 155 (GTLV…CAVS), 163 to 183 (VTLL…IAIF), 209 to 229 (IVLY…GGYA), 230 to 250 (GLGY…MAWG), and 264 to 284 (VFGF…VDSQ).

It belongs to the UbiA prenyltransferase family. Protoheme IX farnesyltransferase subfamily.

It is found in the cell inner membrane. It catalyses the reaction heme b + (2E,6E)-farnesyl diphosphate + H2O = Fe(II)-heme o + diphosphate. It participates in porphyrin-containing compound metabolism; heme O biosynthesis; heme O from protoheme: step 1/1. Functionally, converts heme B (protoheme IX) to heme O by substitution of the vinyl group on carbon 2 of heme B porphyrin ring with a hydroxyethyl farnesyl side group. The chain is Protoheme IX farnesyltransferase 2 from Pseudomonas putida (strain W619).